Consider the following 234-residue polypeptide: Large ribosomal subunit protein uL1 (234 aa).

The protein belongs to the universal ribosomal protein uL1 family. In terms of assembly, part of the 50S ribosomal subunit.

In terms of biological role, binds directly to 23S rRNA. The L1 stalk is quite mobile in the ribosome, and is involved in E site tRNA release. Functionally, protein L1 is also a translational repressor protein, it controls the translation of the L11 operon by binding to its mRNA. This is Large ribosomal subunit protein uL1 from Desulfosudis oleivorans (strain DSM 6200 / JCM 39069 / Hxd3) (Desulfococcus oleovorans).